A 1058-amino-acid polypeptide reads, in one-letter code: Ubiquitin-like modifier-activating enzyme 1 (1058 aa).

Residues 1–47 (MSSSPLSKKRRVSGPDPKPGSNCSPAQSVLPQVPSAPTNGMAKNGSE) form a disordered region. Position 2 is an N-acetylserine (Ser-2). Phosphoserine occurs at positions 4, 13, 21, 24, and 46. Residues 21–38 (SNCSPAQSVLPQVPSAPT) are compositionally biased toward polar residues. A Phosphotyrosine modification is found at Tyr-55. Repeat copies occupy residues 63–199 (GHEA…GQLF) and 459–611 (GSDL…QVVI). Positions 63-611 (GHEAMKRLQT…GTKGNVQVVI (549 aa)) are 2 approximate repeats. Residues Ala-478, Asp-504, Arg-515, Lys-528, and 576–577 (DN) each bind ATP. Position 528 is an N6-succinyllysine (Lys-528). Residue Cys-632 is the Glycyl thioester intermediate of the active site. Lys-671 is modified (N6-acetyllysine). Thr-800 carries the phosphothreonine modification. Phosphoserine is present on residues Ser-810, Ser-816, Ser-820, and Ser-835. The residue at position 980 (Lys-980) is an N6-acetyllysine.

Belongs to the ubiquitin-activating E1 family. As to quaternary structure, monomer. In terms of tissue distribution, ubiquitous.

It is found in the cytoplasm. Its subcellular location is the mitochondrion. It localises to the nucleus. It carries out the reaction ATP + ubiquitin + [E1 ubiquitin-activating enzyme]-L-cysteine = AMP + diphosphate + S-ubiquitinyl-[E1 ubiquitin-activating enzyme]-L-cysteine.. It participates in protein modification; protein ubiquitination. In terms of biological role, catalyzes the first step in ubiquitin conjugation to mark cellular proteins for degradation through the ubiquitin-proteasome system. Activates ubiquitin by first adenylating its C-terminal glycine residue with ATP, and thereafter linking this residue to the side chain of a cysteine residue in E1, yielding a ubiquitin-E1 thioester and free AMP. Essential for the formation of radiation-induced foci, timely DNA repair and for response to replication stress. Promotes the recruitment of TP53BP1 and BRCA1 at DNA damage sites. The protein is Ubiquitin-like modifier-activating enzyme 1 (UBA1) of Oryctolagus cuniculus (Rabbit).